Here is a 98-residue protein sequence, read N- to C-terminus: NADH-ubiquinone oxidoreductase chain 4L (98 aa).

The next 3 helical transmembrane spans lie at 1 to 21, 29 to 49, and 61 to 81; these read MSIT…GMFV, SLLC…IVSL, and VILL…LIMV.

Belongs to the complex I subunit 4L family. In terms of assembly, core subunit of respiratory chain NADH dehydrogenase (Complex I) which is composed of 45 different subunits.

The protein localises to the mitochondrion inner membrane. The catalysed reaction is a ubiquinone + NADH + 5 H(+)(in) = a ubiquinol + NAD(+) + 4 H(+)(out). Core subunit of the mitochondrial membrane respiratory chain NADH dehydrogenase (Complex I) which catalyzes electron transfer from NADH through the respiratory chain, using ubiquinone as an electron acceptor. Part of the enzyme membrane arm which is embedded in the lipid bilayer and involved in proton translocation. The sequence is that of NADH-ubiquinone oxidoreductase chain 4L (MT-ND4L) from Ochotona princeps (Southern American pika).